Consider the following 41-residue polypeptide: Large ribosomal subunit protein bL36 (41 aa).

This sequence belongs to the bacterial ribosomal protein bL36 family.

This is Large ribosomal subunit protein bL36 from Sinorhizobium medicae (strain WSM419) (Ensifer medicae).